We begin with the raw amino-acid sequence, 258 residues long: Regulatory protein RecX (258 aa).

It belongs to the RecX family.

The protein resides in the cytoplasm. Functionally, modulates RecA activity. This chain is Regulatory protein RecX, found in Streptococcus mutans serotype c (strain ATCC 700610 / UA159).